The chain runs to 527 residues: Peptide chain release factor 3 (527 aa).

One can recognise a tr-type G domain in the interval 9–277 (AKRRTFAIIS…AVVDWAPRPL (269 aa)). GTP-binding positions include 18–25 (SHPDAGKT), 86–90 (DTPGH), and 140–143 (NKLD).

This sequence belongs to the TRAFAC class translation factor GTPase superfamily. Classic translation factor GTPase family. PrfC subfamily.

The protein localises to the cytoplasm. In terms of biological role, increases the formation of ribosomal termination complexes and stimulates activities of RF-1 and RF-2. It binds guanine nucleotides and has strong preference for UGA stop codons. It may interact directly with the ribosome. The stimulation of RF-1 and RF-2 is significantly reduced by GTP and GDP, but not by GMP. The chain is Peptide chain release factor 3 from Pseudomonas fluorescens (strain Pf0-1).